The sequence spans 33 residues: Brevinin 2AV (33 aa).

C27 and C33 are oxidised to a cystine.

Expressed by the skin glands.

The protein localises to the secreted. In terms of biological role, has antibacterial activity. This Rana arvalis (Moor frog) protein is Brevinin 2AV.